The primary structure comprises 213 residues: MVQAKICGLSTLDAVTAAVAGGAAFVGFVFFEKSPRNLDPEAAARLVASLRQSPVKTVAVTVDPDDALIDRLMATMKPDLIQVHGRETPSRVRQIAERSGAGVIKAFSVSSAADVDQAGAFDGLVEHLMFDARPVEGSVLPGGTGARFDWSLLQGRRFSRPHFLAGGLDPWNVAEAVKASGAPLVDVSSGVERGPGLKDPALITAFLDAVKRV.

It belongs to the TrpF family.

The catalysed reaction is N-(5-phospho-beta-D-ribosyl)anthranilate = 1-(2-carboxyphenylamino)-1-deoxy-D-ribulose 5-phosphate. It functions in the pathway amino-acid biosynthesis; L-tryptophan biosynthesis; L-tryptophan from chorismate: step 3/5. The chain is N-(5'-phosphoribosyl)anthranilate isomerase from Caulobacter sp. (strain K31).